Consider the following 308-residue polypeptide: Ribonuclease HIII (308 aa).

In terms of domain architecture, RNase H type-2 spans 93-308 (MSVLGSDETG…ANTEKARKMI (216 aa)). D99, E100, and D204 together coordinate a divalent metal cation.

This sequence belongs to the RNase HII family. RnhC subfamily. It depends on Mn(2+) as a cofactor. Requires Mg(2+) as cofactor.

The protein localises to the cytoplasm. The enzyme catalyses Endonucleolytic cleavage to 5'-phosphomonoester.. In terms of biological role, endonuclease that specifically degrades the RNA of RNA-DNA hybrids. The protein is Ribonuclease HIII of Lysinibacillus sphaericus (strain C3-41).